A 182-amino-acid chain; its full sequence is UPF0397 protein SAG1634 (182 aa).

A run of 5 helical transmembrane segments spans residues 9-29 (VVAT…VNIP), 42-62 (AVLA…TGFI), 74-94 (SPWW…GFFA), 109-129 (LLLF…VVAP), and 148-168 (FLSS…LLLA).

It belongs to the UPF0397 family.

It is found in the cell membrane. The sequence is that of UPF0397 protein SAG1634 from Streptococcus agalactiae serotype V (strain ATCC BAA-611 / 2603 V/R).